Consider the following 557-residue polypeptide: Eukaryotic translation initiation factor 3 subunit D-2 (557 aa).

The interval 292–306 (QFDMLTVNETALEPP) is RNA gate. The interval 533 to 557 (FDSDNNDGEETSDDRPFLNSKDNKL) is disordered. The segment covering 545-557 (DDRPFLNSKDNKL) has biased composition (basic and acidic residues).

It belongs to the eIF-3 subunit D family. Component of the eukaryotic translation initiation factor 3 (eIF-3) complex. The eIF-3 complex interacts with pix.

It localises to the cytoplasm. Functionally, mRNA cap-binding component of the eukaryotic translation initiation factor 3 (eIF-3) complex, which is involved in protein synthesis of a specialized repertoire of mRNAs and, together with other initiation factors, stimulates binding of mRNA and methionyl-tRNAi to the 40S ribosome. The eIF-3 complex specifically targets and initiates translation of a subset of mRNAs involved in cell proliferation. In the eIF-3 complex, eif3d specifically recognizes and binds the 7-methylguanosine cap of a subset of mRNAs. The polypeptide is Eukaryotic translation initiation factor 3 subunit D-2 (Drosophila grimshawi (Hawaiian fruit fly)).